A 179-amino-acid chain; its full sequence is MAVLQKSMSFSLMGTLAASCLLLIALWAQEANALPVNTRCKLEVSNFQQPYIVNRTFMLAKEASLADNNTDVRLIGEKLFRGVSAKDQCYLMKQVLNFTLEDVLLPQSDRFQPYMQEVVPFLTKLSNQLSSCHISGDDQNIQKNVRRLKETVKKLGESGEIKAIGELDLLFMSLRNACV.

Residues 1-33 form the signal peptide; sequence MAVLQKSMSFSLMGTLAASCLLLIALWAQEANA. Intrachain disulfides connect cysteine 40/cysteine 132 and cysteine 89/cysteine 178. 3 N-linked (GlcNAc...) asparagine glycosylation sites follow: asparagine 54, asparagine 68, and asparagine 97.

It belongs to the IL-10 family.

It is found in the secreted. Its function is as follows. Cytokine that plays a critical role in modulating tissue responses during inflammation. Plays an essential role in the regeneration of epithelial cells to maintain barrier function after injury and for the prevention of further tissue damage. Unlike most of the cytokines, has no effect on immune cells. Signals through a heterodimeric receptor composed of two subunits, the specific receptor IL22RA1 which is present on non-immune cells in many organs and the shared subunit IL10RB. Ligation of IL22RA1 with IL22 induces activation of the tyrosine kinases JAK1 and TYK2, which in turn activates STAT3. In turn, promotes cell survival and proliferation through STAT3, ERK1/2 and PI3K/AKT pathways. Promotes phosphorylation of GSK3B at 'Ser-9' and CTTN. Promotes epithelial cell spreading. In Mus musculus (Mouse), this protein is Interleukin-22 (Il22).